The chain runs to 512 residues: Probable capsid protein 4 (512 aa).

Belongs to the NCLDV major capsid protein family.

The protein resides in the virion. The sequence is that of Probable capsid protein 4 from Acanthamoeba polyphaga mimivirus (APMV).